Reading from the N-terminus, the 636-residue chain is Molybdenum cofactor biosynthesis protein 1 (636 aa).

Residues 1–383 (MAARPLSRML…QMKNRPMILI (383 aa)) form a molybdenum cofactor biosynthesis protein A region. At S64 the chain carries Phosphoserine. One can recognise a Radical SAM core domain in the interval 64–277 (SFGRQHSYLR…LDTVRQQWPE (214 aa)). R73 is a GTP binding site. Residues C80 and C84 each coordinate [4Fe-4S] cluster. Position 86 (Y86) interacts with S-adenosyl-L-methionine. Position 87 (C87) interacts with [4Fe-4S] cluster. A GTP-binding site is contributed by R123. S-adenosyl-L-methionine is bound at residue G127. A GTP-binding site is contributed by T154. S178 is an S-adenosyl-L-methionine binding site. The residue at position 198 (K198) is an N6-acetyllysine. A GTP-binding site is contributed by K215. S-adenosyl-L-methionine is bound at residue M249. The [4Fe-4S] cluster site is built by C312 and C315. 317–319 (RLR) provides a ligand contact to GTP. C329 contributes to the [4Fe-4S] cluster binding site. The molybdenum cofactor biosynthesis protein C stretch occupies residues 414 to 636 (MSFSSQVATL…GGQRGDFHRA (223 aa)). The segment at 456-480 (DANSKCLSPGSWASAAPSGPQLTSE) is disordered. Over residues 463–475 (SPGSWASAAPSGP) the composition is skewed to low complexity. K528 is modified (N6-acetyllysine). The active-site For molybdenum cofactor biosynthesis protein C activity is the D606.

It in the C-terminal section; belongs to the MoaC family. This sequence in the N-terminal section; belongs to the radical SAM superfamily. MoaA family. Isoform MOCS1A and isoform MOCS1B probably form a heterooligomer. The cofactor is [4Fe-4S] cluster. In terms of tissue distribution, isoform MOCS1A and isoform 2 are widely expressed.

It catalyses the reaction GTP + AH2 + S-adenosyl-L-methionine = (8S)-3',8-cyclo-7,8-dihydroguanosine 5'-triphosphate + 5'-deoxyadenosine + L-methionine + A + H(+). It carries out the reaction (8S)-3',8-cyclo-7,8-dihydroguanosine 5'-triphosphate = cyclic pyranopterin phosphate + diphosphate. The protein operates within cofactor biosynthesis; molybdopterin biosynthesis. Isoform MOCS1A and isoform MOCS1B probably form a complex that catalyzes the conversion of 5'-GTP to cyclic pyranopterin monophosphate (cPMP). MOCS1A catalyzes the cyclization of GTP to (8S)-3',8-cyclo-7,8-dihydroguanosine 5'-triphosphate and MOCS1B catalyzes the subsequent conversion of (8S)-3',8-cyclo-7,8-dihydroguanosine 5'-triphosphate to cPMP. In Homo sapiens (Human), this protein is Molybdenum cofactor biosynthesis protein 1 (MOCS1).